The following is a 278-amino-acid chain: Bicarbonate transport ATP-binding protein CmpD (278 aa).

Positions 21–254 (LIVENVSKIY…RPRDRERIME (234 aa)) constitute an ABC transporter domain. 57–64 (GHSGCGKS) provides a ligand contact to ATP.

It belongs to the ABC transporter superfamily. Nitrate/nitrite/cyanate uptake transporter (NitT) (TC 3.A.1.16) family. The complex is composed of two ATP-binding proteins (CmpC and CmpD), a transmembrane protein (CmpB) and a solute-binding protein (CmpA).

It is found in the cell inner membrane. Functionally, part of the ABC transporter complex CmpABCD involved in bicarbonate transport. Responsible for energy coupling to the transport system. This chain is Bicarbonate transport ATP-binding protein CmpD (cmpD), found in Synechococcus elongatus (strain ATCC 33912 / PCC 7942 / FACHB-805) (Anacystis nidulans R2).